A 179-amino-acid chain; its full sequence is Large ribosomal subunit protein uL10 (179 aa).

The protein belongs to the universal ribosomal protein uL10 family. Part of the ribosomal stalk of the 50S ribosomal subunit. The N-terminus interacts with L11 and the large rRNA to form the base of the stalk. The C-terminus forms an elongated spine to which L12 dimers bind in a sequential fashion forming a multimeric L10(L12)X complex.

Its function is as follows. Forms part of the ribosomal stalk, playing a central role in the interaction of the ribosome with GTP-bound translation factors. The polypeptide is Large ribosomal subunit protein uL10 (Mycolicibacterium gilvum (strain PYR-GCK) (Mycobacterium gilvum (strain PYR-GCK))).